The chain runs to 421 residues: Monopolin complex subunit mde4 (421 aa).

2 disordered regions span residues 122 to 158 (QKSN…NKDE) and 224 to 316 (DRKL…MTVS). Residues 133 to 149 (VSQNRLRGSLDTVSSPS) are compositionally biased toward polar residues. A compositionally biased stretch (basic and acidic residues) spans 224-238 (DRKLRMQKKSTERKS). Polar residues predominate over residues 262-287 (RQPNATSGSPLSVTPFLQKTSTSIGL). Residues 288 to 304 (SSSPPQSSPSAQSSQPF) are compositionally biased toward low complexity.

Component of a monopolin-like complex composed of pcs1 and mde4. The complex associates with the kinetochore.

The protein localises to the nucleus. Its subcellular location is the chromosome. It is found in the centromere. In terms of biological role, the monopolin-like pcs1/mde4 complex is essential for accurate chromosome segregation during mitosis and meiosis II. May clamp together microtubule binding sites on the same kinetochore, preventing merotelic attachment of microtubules. In Schizosaccharomyces pombe (strain 972 / ATCC 24843) (Fission yeast), this protein is Monopolin complex subunit mde4 (mde4).